The sequence spans 367 residues: Glutamate 5-kinase (367 aa).

Lysine 10 lines the ATP pocket. Residues serine 50, aspartate 137, and asparagine 149 each coordinate substrate. ATP-binding positions include 169–170 (TD) and 211–217 (TGGMGTK). Residues 275-353 (AGEITVDDGA…QEISEILGYE (79 aa)) enclose the PUA domain.

Belongs to the glutamate 5-kinase family.

It localises to the cytoplasm. It catalyses the reaction L-glutamate + ATP = L-glutamyl 5-phosphate + ADP. It functions in the pathway amino-acid biosynthesis; L-proline biosynthesis; L-glutamate 5-semialdehyde from L-glutamate: step 1/2. Catalyzes the transfer of a phosphate group to glutamate to form L-glutamate 5-phosphate. This is Glutamate 5-kinase from Serratia proteamaculans (strain 568).